Reading from the N-terminus, the 281-residue chain is 3-methyl-2-oxobutanoate hydroxymethyltransferase (281 aa).

Positions 1-20 (MSEQTIYGANTPGGSGPRTK) are disordered. 2 residues coordinate Mg(2+): Asp62 and Asp101. 3-methyl-2-oxobutanoate-binding positions include 62–63 (DS), Asp101, and Lys131. Glu133 lines the Mg(2+) pocket. The active-site Proton acceptor is Glu199.

Belongs to the PanB family. In terms of assembly, homodecamer; pentamer of dimers. Mg(2+) is required as a cofactor.

The protein resides in the cytoplasm. It carries out the reaction 3-methyl-2-oxobutanoate + (6R)-5,10-methylene-5,6,7,8-tetrahydrofolate + H2O = 2-dehydropantoate + (6S)-5,6,7,8-tetrahydrofolate. It participates in cofactor biosynthesis; (R)-pantothenate biosynthesis; (R)-pantoate from 3-methyl-2-oxobutanoate: step 1/2. Functionally, catalyzes the reversible reaction in which hydroxymethyl group from 5,10-methylenetetrahydrofolate is transferred onto alpha-ketoisovalerate to form ketopantoate. This is 3-methyl-2-oxobutanoate hydroxymethyltransferase from Mycobacterium bovis (strain ATCC BAA-935 / AF2122/97).